The sequence spans 258 residues: Imidazole glycerol phosphate synthase subunit HisF (258 aa).

Catalysis depends on residues D11 and D130.

Belongs to the HisA/HisF family. In terms of assembly, heterodimer of HisH and HisF.

The protein resides in the cytoplasm. The catalysed reaction is 5-[(5-phospho-1-deoxy-D-ribulos-1-ylimino)methylamino]-1-(5-phospho-beta-D-ribosyl)imidazole-4-carboxamide + L-glutamine = D-erythro-1-(imidazol-4-yl)glycerol 3-phosphate + 5-amino-1-(5-phospho-beta-D-ribosyl)imidazole-4-carboxamide + L-glutamate + H(+). Its pathway is amino-acid biosynthesis; L-histidine biosynthesis; L-histidine from 5-phospho-alpha-D-ribose 1-diphosphate: step 5/9. Functionally, IGPS catalyzes the conversion of PRFAR and glutamine to IGP, AICAR and glutamate. The HisF subunit catalyzes the cyclization activity that produces IGP and AICAR from PRFAR using the ammonia provided by the HisH subunit. This Blochmanniella floridana protein is Imidazole glycerol phosphate synthase subunit HisF.